We begin with the raw amino-acid sequence, 211 residues long: NADH-quinone oxidoreductase subunit I 1 (211 aa).

4Fe-4S ferredoxin-type domains lie at 50-80 (LNRH…VEGA) and 96-125 (RVYQ…MTNE). Cys-60, Cys-63, Cys-66, Cys-70, Cys-105, Cys-108, Cys-111, and Cys-115 together coordinate [4Fe-4S] cluster. Positions 192–211 (QEGDSTFGATEPASEEVIRR) are disordered.

This sequence belongs to the complex I 23 kDa subunit family. As to quaternary structure, NDH-1 is composed of 14 different subunits. Subunits NuoA, H, J, K, L, M, N constitute the membrane sector of the complex. It depends on [4Fe-4S] cluster as a cofactor.

Its subcellular location is the cell membrane. The enzyme catalyses a quinone + NADH + 5 H(+)(in) = a quinol + NAD(+) + 4 H(+)(out). Its function is as follows. NDH-1 shuttles electrons from NADH, via FMN and iron-sulfur (Fe-S) centers, to quinones in the respiratory chain. The immediate electron acceptor for the enzyme in this species is believed to be ubiquinone. Couples the redox reaction to proton translocation (for every two electrons transferred, four hydrogen ions are translocated across the cytoplasmic membrane), and thus conserves the redox energy in a proton gradient. This chain is NADH-quinone oxidoreductase subunit I 1, found in Streptomyces coelicolor (strain ATCC BAA-471 / A3(2) / M145).